A 260-amino-acid chain; its full sequence is Cobalt transport protein CbiM (260 aa).

Positions 1–34 are cleaved as a signal peptide; sequence MKLGESMKKNATLSVKIIAFLGVLIFTVMPVANA. Helical transmembrane passes span 39 to 59, 77 to 97, 109 to 129, 132 to 152, 175 to 195, and 215 to 235; these read EGYLSPKWCIIWGILVLPFLI, LLFAMAGAFIFILSALKLPSF, LSTILFGPAITTVLGVIVLLF, LLLAHGGISTLGANSFAMAVM, IFFSATVGDLFTYCITAIQLG, and VFAITQIPIAIAEGILTVLIF.

This sequence belongs to the CbiM family. Forms an energy-coupling factor (ECF) transporter complex composed of an ATP-binding protein (A component, CbiO), a transmembrane protein (T component, CbiQ) and 2 possible substrate-capture proteins (S components, CbiM and CbiN) of unknown stoichimetry.

The protein resides in the cell membrane. It functions in the pathway cofactor biosynthesis; adenosylcobalamin biosynthesis. In terms of biological role, part of the energy-coupling factor (ECF) transporter complex CbiMNOQ involved in cobalt import. This chain is Cobalt transport protein CbiM, found in Clostridium cellulovorans (strain ATCC 35296 / DSM 3052 / OCM 3 / 743B).